Here is a 354-residue protein sequence, read N- to C-terminus: uncharacterized protein (354 aa).

Residues 43 to 63 (LIAVTLWSCVGSLLFICLLAV) traverse the membrane as a helical segment.

The protein localises to the cell membrane. This is an uncharacterized protein from Bacillus subtilis (strain 168).